A 635-amino-acid polypeptide reads, in one-letter code: Threonine--tRNA ligase (635 aa).

One can recognise a TGS domain in the interval 1-61 (MIKITLKDGK…HKDSSLEILT (61 aa)). Positions 242–532 (DHRKLGKELD…LIEQYAGAFP (291 aa)) are catalytic. Positions 333, 384, and 509 each coordinate Zn(2+).

It belongs to the class-II aminoacyl-tRNA synthetase family. In terms of assembly, homodimer. Requires Zn(2+) as cofactor.

Its subcellular location is the cytoplasm. It catalyses the reaction tRNA(Thr) + L-threonine + ATP = L-threonyl-tRNA(Thr) + AMP + diphosphate + H(+). Its function is as follows. Catalyzes the attachment of threonine to tRNA(Thr) in a two-step reaction: L-threonine is first activated by ATP to form Thr-AMP and then transferred to the acceptor end of tRNA(Thr). Also edits incorrectly charged L-seryl-tRNA(Thr). The polypeptide is Threonine--tRNA ligase (Clostridium botulinum (strain Loch Maree / Type A3)).